Consider the following 359-residue polypeptide: MATH domain and coiled-coil domain-containing protein At2g42475 (359 aa).

The region spanning Lys-6–Val-128 is the MATH domain. Positions Glu-146–Lys-337 form a coiled coil.

This chain is MATH domain and coiled-coil domain-containing protein At2g42475, found in Arabidopsis thaliana (Mouse-ear cress).